The sequence spans 342 residues: Holliday junction branch migration complex subunit RuvB (342 aa).

Residues 1-182 (MRIEALNTAP…FGINSRLDYY (182 aa)) are large ATPase domain (RuvB-L). Residues Ile21, Arg22, Gly63, Lys66, Thr67, Thr68, 129 to 131 (EDY), Arg172, Tyr182, and Arg219 contribute to the ATP site. Thr67 contacts Mg(2+). Residues 183 to 253 (SPELLQSIIV…VARRTLESLE (71 aa)) are small ATPAse domain (RuvB-S). A head domain (RuvB-H) region spans residues 256 to 342 (EGGLDDMDKK…DHGPLFDHNS (87 aa)). Residues Arg311 and Arg316 each contribute to the DNA site.

It belongs to the RuvB family. In terms of assembly, homohexamer. Forms an RuvA(8)-RuvB(12)-Holliday junction (HJ) complex. HJ DNA is sandwiched between 2 RuvA tetramers; dsDNA enters through RuvA and exits via RuvB. An RuvB hexamer assembles on each DNA strand where it exits the tetramer. Each RuvB hexamer is contacted by two RuvA subunits (via domain III) on 2 adjacent RuvB subunits; this complex drives branch migration. In the full resolvosome a probable DNA-RuvA(4)-RuvB(12)-RuvC(2) complex forms which resolves the HJ.

The protein localises to the cytoplasm. The enzyme catalyses ATP + H2O = ADP + phosphate + H(+). Functionally, the RuvA-RuvB-RuvC complex processes Holliday junction (HJ) DNA during genetic recombination and DNA repair, while the RuvA-RuvB complex plays an important role in the rescue of blocked DNA replication forks via replication fork reversal (RFR). RuvA specifically binds to HJ cruciform DNA, conferring on it an open structure. The RuvB hexamer acts as an ATP-dependent pump, pulling dsDNA into and through the RuvAB complex. RuvB forms 2 homohexamers on either side of HJ DNA bound by 1 or 2 RuvA tetramers; 4 subunits per hexamer contact DNA at a time. Coordinated motions by a converter formed by DNA-disengaged RuvB subunits stimulates ATP hydrolysis and nucleotide exchange. Immobilization of the converter enables RuvB to convert the ATP-contained energy into a lever motion, pulling 2 nucleotides of DNA out of the RuvA tetramer per ATP hydrolyzed, thus driving DNA branch migration. The RuvB motors rotate together with the DNA substrate, which together with the progressing nucleotide cycle form the mechanistic basis for DNA recombination by continuous HJ branch migration. Branch migration allows RuvC to scan DNA until it finds its consensus sequence, where it cleaves and resolves cruciform DNA. This is Holliday junction branch migration complex subunit RuvB from Chlorobaculum parvum (strain DSM 263 / NCIMB 8327) (Chlorobium vibrioforme subsp. thiosulfatophilum).